A 255-amino-acid chain; its full sequence is Tryptophan synthase alpha chain (255 aa).

Catalysis depends on proton acceptor residues Glu42 and Asp53.

This sequence belongs to the TrpA family. In terms of assembly, tetramer of two alpha and two beta chains.

It carries out the reaction (1S,2R)-1-C-(indol-3-yl)glycerol 3-phosphate + L-serine = D-glyceraldehyde 3-phosphate + L-tryptophan + H2O. Its pathway is amino-acid biosynthesis; L-tryptophan biosynthesis; L-tryptophan from chorismate: step 5/5. In terms of biological role, the alpha subunit is responsible for the aldol cleavage of indoleglycerol phosphate to indole and glyceraldehyde 3-phosphate. This is Tryptophan synthase alpha chain from Wolinella succinogenes (strain ATCC 29543 / DSM 1740 / CCUG 13145 / JCM 31913 / LMG 7466 / NCTC 11488 / FDC 602W) (Vibrio succinogenes).